We begin with the raw amino-acid sequence, 576 residues long: MAGUK p55 subfamily member 7 (576 aa).

2 consecutive L27 domains span residues cysteine 10–asparagine 64 and proline 65–valine 122. The PDZ domain occupies isoleucine 139 to threonine 220. An SH3 domain is found at glutamate 228–leucine 298. A phospho-regulated basic and hydrophobic (PRBH) motif region spans residues proline 289–glutamate 383. The 193-residue stretch at tyrosine 368 to aspartate 560 folds into the Guanylate kinase-like domain. Position 409 is a phosphoserine (serine 409).

This sequence belongs to the MAGUK family. In terms of assembly, heterodimer; able to heterodimerize via its C-terminal L27 domain with LIN7A, LIN7B and LIN7C. Forms a tripartite complex composed of DLG1, MPP7 and LIN7 (LIN7A or LIN7C). Interacts with DLG1 via its N-terminal L27 domain. Interacts with PALS1 and PATJ. Phosphorylated by aPKC which promotes dissociation from the cell cortex.

The protein resides in the membrane. It is found in the lateral cell membrane. The protein localises to the cell junction. Its subcellular location is the tight junction. It localises to the adherens junction. The protein resides in the cytoplasm. It is found in the cell cortex. In terms of biological role, acts as an important adapter that promotes epithelial cell polarity and tight junction formation via its interaction with DLG1. Involved in the assembly of protein complexes at sites of cell-cell contact. This is MAGUK p55 subfamily member 7 (Mpp7) from Mus musculus (Mouse).